A 137-amino-acid polypeptide reads, in one-letter code: Leaf-specific thionin DB4 (137 aa).

The signal sequence occupies residues 1-28 (MAPSKSIKSVVICVLILGLVLEQVQVEG). Cystine bridges form between Cys31–Cys68, Cys32–Cys60, Cys40–Cys58, and Cys44–Cys54. Residues 75 to 137 (LNLLPESGEP…DGAVIQSVEA (63 aa)) constitute a propeptide, acidic domain.

The protein belongs to the plant thionin (TC 1.C.44) family. 4 C-C subfamily.

The protein localises to the secreted. Its function is as follows. Thionins are small plant proteins which are toxic to animal cells. They seem to exert their toxic effect at the level of the cell membrane. Their precise function is not known. This is Leaf-specific thionin DB4 (THI1.3) from Hordeum vulgare (Barley).